Here is a 509-residue protein sequence, read N- to C-terminus: Transcription factor atf-7 (509 aa).

The segment covering 283-303 has biased composition (polar residues); it reads TVSSYHSPLGASSQPPSTQKS. Disordered regions lie at residues 283-318 and 337-400; these read TVSSYHSPLGASSQPPSTQKSPADGSWDHINGEKQI and NMSS…ILER. Residues 308 to 318 show a composition bias toward basic and acidic residues; it reads SWDHINGEKQI. Over residues 337-364 the composition is skewed to low complexity; it reads NMSSSGSDQDQSADMSNAGSTASTSTGN. Residues 390–400 show a composition bias toward basic and acidic residues; it reads PDERRNTILER. The 74-residue stretch at 391–464 folds into the bZIP domain; that stretch reads DERRNTILER…TERESRCVCL (74 aa). Positions 393–413 are basic motif; the sequence is RRNTILERNKAAAVRYRKRKK. The interval 419-450 is leucine-zipper; the sequence is MMGRVQAMEAEKNQLLAIQTQNQVLRRELERV.

The protein belongs to the bZIP family. In terms of assembly, interacts with serine/threonine kinase pmk-1; perhaps in a manner dependent on dual specificity protein kinase sek-1. Expressed in intestinal cells.

The protein resides in the nucleus. Its subcellular location is the chromosome. In terms of biological role, transcription factor which regulates the transcription of various genes, including those involved in innate immunity and oxidative stress responses. Binds to promoter regions of genes, probably at 5'-[GACGTCA]-3' consensus sequences. Together with transcription factor daf-19, involved in regulation of the serotonergic response of ADF neurons to pathogenic food. Modulates response to infection by the Gram-negative bacterium P.aeruginosa, acting downstream of the p38 signal transduction pathway effector serine/threonine kinase pmk-1. May act with transcription factor elt-2 to control p38 gene induction in response to bacterial infection. May be phosphorylated by pmk-1. Regulates transcription of the metallothionein gene, mtl-1, perhaps acting downstream of pmk-1. This chain is Transcription factor atf-7, found in Caenorhabditis elegans.